The primary structure comprises 392 residues: FK506-binding protein 4 (392 aa).

2 disordered regions span residues 58–116 (NPEL…NEID) and 161–284 (GNYV…PKTK). 3 stretches are compositionally biased toward acidic residues: residues 73–86 (DGLE…EQEA), 104–116 (SESE…NEID), and 172–219 (SDSD…DASD). 2 positions are modified to phosphoserine: serine 80 and serine 82. 2 stretches are compositionally biased toward basic and acidic residues: residues 220–234 (IESR…DEKK) and 252–279 (SAKP…ESKP). In terms of domain architecture, PPIase FKBP-type spans 306-392 (GTRVGMRYVG…TFDVKLVSMK (87 aa)).

It belongs to the FKBP-type PPIase family. FKBP3/4 subfamily. Binds to histones H3 and H4. Interacts with NOP53.

Its subcellular location is the nucleus. It carries out the reaction [protein]-peptidylproline (omega=180) = [protein]-peptidylproline (omega=0). Its function is as follows. PPIase that acts as a histone chaperone. Histone proline isomerase that increases the rate of cis-trans isomerization at 'Pro-17' (H3P16), 'Pro-31' (H3P30) and 'Pro-39 (H3P38) on the histone H3 N-terminal tail. H3P16 and H3P30 are the major proline targets with little activity shown against H3P38. H3P38 isomerization influences SET2-mediated H3K36 methylation thereby regulating gene expression. This is FK506-binding protein 4 from Saccharomyces cerevisiae (strain ATCC 204508 / S288c) (Baker's yeast).